Consider the following 273-residue polypeptide: Aegyptin (273 aa).

The N-terminal stretch at 1-19 is a signal peptide; the sequence is MKPLVKLFLLFCLVGIVLS. The disordered stretch occupies residues 20–160; that stretch reads RPMPEDEEPV…SEKNDPADTY (141 aa). A compositionally biased stretch (acidic residues) spans 24–62; it reads EDEEPVAEGGDDDASGESEGEEETTDDAGGDGGEEENEG. Positions 63 to 86 are enriched in basic and acidic residues; the sequence is EEHAGDKDAGGEDTGKEENTGHDD. The segment covering 87–145 has biased composition (acidic residues); sequence AGEEDAGEEDAGEEDAGEEDAGEEDAEKEEGEKEDAGDDAGSDDGEEDSTGGDEGEDNA. The tract at residues 137–273 is mediates binding of host collagen; that stretch reads GGDEGEDNAE…IKSCVSSKGR (137 aa). Basic and acidic residues predominate over residues 146–158; it reads EDSKGSEKNDPAD. 2 disulfides stabilise this stretch: Cys-213/Cys-267 and Cys-235/Cys-245.

It belongs to the aegyptin family. As to quaternary structure, monomer; exhibits non-globular elongated shape in solution. In terms of tissue distribution, female saliva (at protein level). Adult female salivary gland (at protein level).

The protein localises to the secreted. Its function is as follows. Modulates blood feeding of female mosquitoes on vertebrate hosts. Inhibits collagen-induced platelet aggregation in the host via preventing collagen interaction with its three major ligands: glycoprotein VI, integrin alpha-2/beta-1 (ITGA2/ITGB1) and von Willebrand factor (VWF). Prevents collagen-mediated thrombus formation in the host. Binds to host collagens but not to laminin, vitronectin (VTN), fibronectin (FN1), von Willebrand factor (VWF) and fibrinogen. Influences cytokine production and populations of circulating leukocytes. In terms of biological role, (Microbial infection) Reduces replication of dengue virus type 2 at inoculation site and viremia levels on day 2 post-inoculation. Promotes production of pro-inflammatory cytokines, such as GM-CSF (CSF2), IFN-gamma (IFNG), IL5 and IL6, in the lymph nodes of mice infected with dengue virus type 2. Increases the number of circulating eosinophils in mice infected with dengue virus type 2. Decreases the number of circulating monocytes in mice infected with dengue virus type 2. The chain is Aegyptin from Aedes aegypti (Yellowfever mosquito).